We begin with the raw amino-acid sequence, 163 residues long: Phosphopantetheine adenylyltransferase (163 aa).

Residue serine 9 coordinates substrate. ATP contacts are provided by residues 9–10 and histidine 17; that span reads SF. Substrate-binding residues include lysine 41, leucine 73, and lysine 87. Residues 88-90, glutamate 98, and 124-130 each bind ATP; these read GLR and YTYVSST.

This sequence belongs to the bacterial CoaD family. In terms of assembly, homohexamer. Mg(2+) serves as cofactor.

Its subcellular location is the cytoplasm. It carries out the reaction (R)-4'-phosphopantetheine + ATP + H(+) = 3'-dephospho-CoA + diphosphate. It functions in the pathway cofactor biosynthesis; coenzyme A biosynthesis; CoA from (R)-pantothenate: step 4/5. Reversibly transfers an adenylyl group from ATP to 4'-phosphopantetheine, yielding dephospho-CoA (dPCoA) and pyrophosphate. This is Phosphopantetheine adenylyltransferase from Fusobacterium nucleatum subsp. nucleatum (strain ATCC 25586 / DSM 15643 / BCRC 10681 / CIP 101130 / JCM 8532 / KCTC 2640 / LMG 13131 / VPI 4355).